The following is a 79-amino-acid chain: CDC42 small effector protein 1 (79 aa).

S-palmitoyl cysteine attachment occurs at residues cysteine 10 and cysteine 11. One can recognise a CRIB domain in the interval 30 to 43 (IGEPMNFVHLTHIG). The interval 48-79 (GAGDGLAMTGAVQEQMRSKGNRDRPWSNSRGL) is disordered. A compositionally biased stretch (basic and acidic residues) spans 63–72 (MRSKGNRDRP).

Belongs to the CDC42SE/SPEC family. In terms of assembly, interacts with CDC42 (in GTP-bound form). Interacts weakly with RAC1 and not at all with RHOA.

It localises to the cytoplasm. The protein resides in the cytoskeleton. The protein localises to the cell membrane. Probably involved in the organization of the actin cytoskeleton by acting downstream of CDC42, inducing actin filament assembly. Alters CDC42-induced cell shape changes. In activated T-cells, may play a role in CDC42-mediated F-actin accumulation at the immunological synapse. May play a role in early contractile events in phagocytosis in macrophages. In Bos taurus (Bovine), this protein is CDC42 small effector protein 1 (CDC42SE1).